An 838-amino-acid polypeptide reads, in one-letter code: Outer membrane usher protein YraJ (838 aa).

Positions 1–40 (MPQRHHQGHKRTPKQLALIIKRCLPMVLTGSGMLCTTANA) are cleaved as a signal peptide. Cys815 and Cys837 form a disulfide bridge.

This sequence belongs to the fimbrial export usher family.

Its subcellular location is the cell outer membrane. Part of the yraHIJK fimbrial operon. Could contribute to adhesion to various surfaces in specific environmental niches. Increases adhesion to eukaryotic T24 bladder epithelial cells in the absence of fim operon. Probably involved in the export and assembly of fimbrial subunits across the outer membrane. The chain is Outer membrane usher protein YraJ (yraJ) from Escherichia coli (strain K12).